The following is a 1196-amino-acid chain: DNA-directed RNA polymerase subunit beta (1196 aa).

It belongs to the RNA polymerase beta chain family. The RNAP catalytic core consists of 2 alpha, 1 beta, 1 beta' and 1 omega subunit. When a sigma factor is associated with the core the holoenzyme is formed, which can initiate transcription.

It catalyses the reaction RNA(n) + a ribonucleoside 5'-triphosphate = RNA(n+1) + diphosphate. Functionally, DNA-dependent RNA polymerase catalyzes the transcription of DNA into RNA using the four ribonucleoside triphosphates as substrates. In Lactococcus lactis subsp. cremoris (strain MG1363), this protein is DNA-directed RNA polymerase subunit beta.